A 385-amino-acid chain; its full sequence is MAGWHLDTKMAQDIVARTMRIIDTNINVMDARGRIIGSGDRERIGELHEGALLVLSQGRVVDIDDAVARHLHGVRQGINLPLRLEGEIVGVIGLTGEPENLRKYGELVCMTAEMMLEQSRLMHLLAQDSRLREELVMNLIQAEENTPALTEWAQRLGIDLNQPRVVAIVEVDSGQLGVDSAMAELQQLQNALTTPERNNLVAIVSLTEMVVLKPALNSFGRWDAEDHRKRVEQLITRMKEYGQLRFRVSLGNYFTGPGSIARSYRTAKTTMVVGKQRMPESRCYFYQDLMLPVLLDSLRGDWQANELARPLARLKTMDNNGLLRRTLAAWFRHNVQPLATSKALFIHRNTLEYRLNRISELTGLDLGNFDDRLLLYVALQLDEER.

Belongs to the CdaR family.

Seems to regulate the expression of the operons for the enzymes involved in D-galactarate, D-glucarate and D-glycerate utilization. This chain is Carbohydrate diacid regulator (cdaR), found in Escherichia coli (strain K12).